The following is a 251-amino-acid chain: 3-deoxy-manno-octulosonate cytidylyltransferase (251 aa).

It belongs to the KdsB family.

It is found in the cytoplasm. It carries out the reaction 3-deoxy-alpha-D-manno-oct-2-ulosonate + CTP = CMP-3-deoxy-beta-D-manno-octulosonate + diphosphate. It participates in nucleotide-sugar biosynthesis; CMP-3-deoxy-D-manno-octulosonate biosynthesis; CMP-3-deoxy-D-manno-octulosonate from 3-deoxy-D-manno-octulosonate and CTP: step 1/1. It functions in the pathway bacterial outer membrane biogenesis; lipopolysaccharide biosynthesis. Activates KDO (a required 8-carbon sugar) for incorporation into bacterial lipopolysaccharide in Gram-negative bacteria. This Rhizobium etli (strain ATCC 51251 / DSM 11541 / JCM 21823 / NBRC 15573 / CFN 42) protein is 3-deoxy-manno-octulosonate cytidylyltransferase.